The sequence spans 932 residues: UPF0182 protein Syncc9902_1151 (932 aa).

The next 9 membrane-spanning stretches (helical) occupy residues Phe-4–Val-24, Met-40–Leu-60, Val-85–Ile-105, Met-124–Cys-144, Trp-151–Trp-171, Ile-201–Trp-221, Tyr-243–Leu-263, Leu-293–Leu-313, and Arg-315–Thr-335.

It belongs to the UPF0182 family.

Its subcellular location is the cell membrane. This chain is UPF0182 protein Syncc9902_1151, found in Synechococcus sp. (strain CC9902).